We begin with the raw amino-acid sequence, 197 residues long: Histidine biosynthesis bifunctional protein HisIE (197 aa).

Positions 1–108 (MMTLYPVVVQ…RFEETGSPTF (108 aa)) are phosphoribosyl-AMP cyclohydrolase. Residues 109–197 (WLELYRLVRK…VMRELEKRRK (89 aa)) are phosphoribosyl-ATP pyrophosphohydrolase.

The protein in the N-terminal section; belongs to the PRA-CH family. This sequence in the C-terminal section; belongs to the PRA-PH family.

The protein resides in the cytoplasm. It catalyses the reaction 1-(5-phospho-beta-D-ribosyl)-ATP + H2O = 1-(5-phospho-beta-D-ribosyl)-5'-AMP + diphosphate + H(+). The catalysed reaction is 1-(5-phospho-beta-D-ribosyl)-5'-AMP + H2O = 1-(5-phospho-beta-D-ribosyl)-5-[(5-phospho-beta-D-ribosylamino)methylideneamino]imidazole-4-carboxamide. It functions in the pathway amino-acid biosynthesis; L-histidine biosynthesis; L-histidine from 5-phospho-alpha-D-ribose 1-diphosphate: step 2/9. The protein operates within amino-acid biosynthesis; L-histidine biosynthesis; L-histidine from 5-phospho-alpha-D-ribose 1-diphosphate: step 3/9. The chain is Histidine biosynthesis bifunctional protein HisIE (hisI) from Thermotoga maritima (strain ATCC 43589 / DSM 3109 / JCM 10099 / NBRC 100826 / MSB8).